A 532-amino-acid chain; its full sequence is GH3 domain-containing protein (532 aa).

Positions 1–18 (MLLLWLLLLLLLLVPLLA) are cleaved as a signal peptide. The disordered stretch occupies residues 100 to 123 (LTQTSHTQEQESEETLPSPASPQY). 2 N-linked (GlcNAc...) asparagine glycosylation sites follow: Asn356 and Asn451.

Belongs to the GH3 family. As to expression, highly expressed in mammary tissues from mature virgins and at day 13 of pregnancy, and at lower level during lactation. Expressed at intermediate level in liver. Expressed at lower level in kidney, heart and brain.

It localises to the endoplasmic reticulum. The protein localises to the nucleus envelope. The sequence is that of GH3 domain-containing protein (Ghdc) from Mus musculus (Mouse).